The chain runs to 503 residues: Glutamate--tRNA ligase (503 aa).

The short motif at 14 to 24 (PSPTGSLHIGG) is the 'HIGH' region element. The 'KMSKS' region signature appears at 261–265 (KLSKR). ATP is bound at residue lysine 264.

This sequence belongs to the class-I aminoacyl-tRNA synthetase family. Glutamate--tRNA ligase type 1 subfamily. As to quaternary structure, monomer.

Its subcellular location is the cytoplasm. The catalysed reaction is tRNA(Glu) + L-glutamate + ATP = L-glutamyl-tRNA(Glu) + AMP + diphosphate. Functionally, catalyzes the attachment of glutamate to tRNA(Glu) in a two-step reaction: glutamate is first activated by ATP to form Glu-AMP and then transferred to the acceptor end of tRNA(Glu). This is Glutamate--tRNA ligase from Chloroflexus aurantiacus (strain ATCC 29366 / DSM 635 / J-10-fl).